A 180-amino-acid chain; its full sequence is Inosine/xanthosine triphosphatase (180 aa).

8–13 (TTNPAK) contacts substrate. Asp38 and Glu68 together coordinate Mg(2+). 68 to 69 (EA) lines the substrate pocket.

This sequence belongs to the YjjX NTPase family. As to quaternary structure, homodimer. Requires Mg(2+) as cofactor. It depends on Mn(2+) as a cofactor.

It catalyses the reaction XTP + H2O = XDP + phosphate + H(+). The enzyme catalyses ITP + H2O = IDP + phosphate + H(+). In terms of biological role, phosphatase that hydrolyzes non-canonical purine nucleotides such as XTP and ITP to their respective diphosphate derivatives. Probably excludes non-canonical purines from DNA/RNA precursor pool, thus preventing their incorporation into DNA/RNA and avoiding chromosomal lesions. This chain is Inosine/xanthosine triphosphatase, found in Yersinia pestis bv. Antiqua (strain Antiqua).